Here is an 885-residue protein sequence, read N- to C-terminus: DNA mismatch repair protein MutS (885 aa).

626–633 lines the ATP pocket; sequence GPNMGGKS.

This sequence belongs to the DNA mismatch repair MutS family.

Its function is as follows. This protein is involved in the repair of mismatches in DNA. It is possible that it carries out the mismatch recognition step. This protein has a weak ATPase activity. This Burkholderia orbicola (strain MC0-3) protein is DNA mismatch repair protein MutS.